A 336-amino-acid polypeptide reads, in one-letter code: Fructose-1,6-bisphosphatase class 1 (336 aa).

4 residues coordinate Mg(2+): Glu98, Asp117, Leu119, and Asp120. Substrate is bound by residues 120 to 123, Asn210, and Lys276; that span reads DGSS. Residue Glu282 participates in Mg(2+) binding.

This sequence belongs to the FBPase class 1 family. Homotetramer. The cofactor is Mg(2+).

The protein localises to the cytoplasm. It catalyses the reaction beta-D-fructose 1,6-bisphosphate + H2O = beta-D-fructose 6-phosphate + phosphate. It functions in the pathway carbohydrate biosynthesis; gluconeogenesis. The chain is Fructose-1,6-bisphosphatase class 1 from Caulobacter vibrioides (strain ATCC 19089 / CIP 103742 / CB 15) (Caulobacter crescentus).